A 101-amino-acid chain; its full sequence is RNA-binding protein Hfq (101 aa).

The Sm domain occupies Asp9–Val68. The interval Val63–Glu101 is disordered. Residues His70–Asn86 are compositionally biased toward polar residues.

It belongs to the Hfq family. As to quaternary structure, homohexamer.

Its function is as follows. RNA chaperone that binds small regulatory RNA (sRNAs) and mRNAs to facilitate mRNA translational regulation in response to envelope stress, environmental stress and changes in metabolite concentrations. Also binds with high specificity to tRNAs. Positively regulates the expression of the yst gene for heat-stable enterotoxin (Y-ST). The polypeptide is RNA-binding protein Hfq (Yersinia enterocolitica).